Consider the following 1183-residue polypeptide: Formin-like protein (1183 aa).

Disordered stretches follow at residues 1 to 44 (MGAV…SISS) and 63 to 82 (QHVR…PTTD). A compositionally biased stretch (basic residues) spans 23–36 (PHSHAHHHSMRNGH). A compositionally biased stretch (polar residues) spans 63 to 79 (QHVRQPSLRSRSQQPMP). A GBD/FH3 domain is found at 76-559 (QPMPTTDELD…HNEQELKKRD (484 aa)). Phosphoserine is present on S225. Residues 572–584 (LSRSLPRSASSGD) show a composition bias toward polar residues. Residues 572–681 (LSRSLPRSAS…PPVAGFMPAP (110 aa)) are disordered. Pro residues-rich tracts occupy residues 605-614 (LPPPPPPMPA) and 622-640 (APPP…PPGF). The segment covering 641-654 (SPLGSPSGSLASTA) has biased composition (low complexity). The FH2 domain maps to 687–1088 (IKRKVPTKYK…AALAASKKEN (402 aa)). Residues 1136–1169 (DEVYNGALEDILLGLKSEPYRRADAVRRSQRRRI) form the DAD domain.

Belongs to the formin homology family. As to quaternary structure, self-associates. Interacts (via GBD/FH3 domain) with Cdc42; the interaction is stronger with the GTP bound form of Cdc42.

Together with Cdc42, involved in establishment of planar cell polarity in the developing compound eye by contributing to ommatidial rotation. Together with DAAM and Cdc42, has a role in neuronal development of mushroom bodies. The chain is Formin-like protein from Drosophila melanogaster (Fruit fly).